A 181-amino-acid chain; its full sequence is ATP synthase subunit delta (181 aa).

The protein belongs to the ATPase delta chain family. As to quaternary structure, F-type ATPases have 2 components, F(1) - the catalytic core - and F(0) - the membrane proton channel. F(1) has five subunits: alpha(3), beta(3), gamma(1), delta(1), epsilon(1). F(0) has three main subunits: a(1), b(2) and c(10-14). The alpha and beta chains form an alternating ring which encloses part of the gamma chain. F(1) is attached to F(0) by a central stalk formed by the gamma and epsilon chains, while a peripheral stalk is formed by the delta and b chains.

Its subcellular location is the cell membrane. F(1)F(0) ATP synthase produces ATP from ADP in the presence of a proton or sodium gradient. F-type ATPases consist of two structural domains, F(1) containing the extramembraneous catalytic core and F(0) containing the membrane proton channel, linked together by a central stalk and a peripheral stalk. During catalysis, ATP synthesis in the catalytic domain of F(1) is coupled via a rotary mechanism of the central stalk subunits to proton translocation. Functionally, this protein is part of the stalk that links CF(0) to CF(1). It either transmits conformational changes from CF(0) to CF(1) or is implicated in proton conduction. This is ATP synthase subunit delta from Lacticaseibacillus paracasei (strain ATCC 334 / BCRC 17002 / CCUG 31169 / CIP 107868 / KCTC 3260 / NRRL B-441) (Lactobacillus paracasei).